The following is a 277-amino-acid chain: Release factor glutamine methyltransferase (277 aa).

S-adenosyl-L-methionine-binding positions include G117 to G121, D140, W168, and N183. N183–Y186 is a substrate binding site.

This sequence belongs to the protein N5-glutamine methyltransferase family. PrmC subfamily.

It catalyses the reaction L-glutaminyl-[peptide chain release factor] + S-adenosyl-L-methionine = N(5)-methyl-L-glutaminyl-[peptide chain release factor] + S-adenosyl-L-homocysteine + H(+). Functionally, methylates the class 1 translation termination release factors RF1/PrfA and RF2/PrfB on the glutamine residue of the universally conserved GGQ motif. This Shigella dysenteriae serotype 1 (strain Sd197) protein is Release factor glutamine methyltransferase.